We begin with the raw amino-acid sequence, 383 residues long: Meiotic recombination protein SPO11-2 (383 aa).

Residues 24–167 (LLPHEARARI…LGIMASSRGL (144 aa)) enclose the Topo IIA-type catalytic domain. Tyrosine 124 serves as the catalytic O-(5'-phospho-DNA)-tyrosine intermediate. Positions 217 and 270 each coordinate Mg(2+).

It belongs to the TOP6A family. As to quaternary structure, heterotetramer of 2 SPO11 (SPO11-1 and/or SPO11-2) and 2 MTOPVIB chains. Interacts with MTOPVIB. May form a heterodimer with SPO11-1. Interacts with PRD1. Does not interact with TOP6B. Mg(2+) is required as a cofactor. In terms of tissue distribution, very low expression in flowers and shoots.

It localises to the nucleus. The enzyme catalyses ATP-dependent breakage, passage and rejoining of double-stranded DNA.. Its function is as follows. Component of a topoisomerase 6 complex specifically required for meiotic recombination. Together with MTOPVIB, mediates DNA cleavage that forms the double-strand breaks (DSB) that initiate meiotic recombination. The complex promotes relaxation of negative and positive supercoiled DNA and DNA decatenation through cleavage and ligation cycles. The chain is Meiotic recombination protein SPO11-2 (SPO11-2) from Arabidopsis thaliana (Mouse-ear cress).